The following is a 301-amino-acid chain: N-acetylmuramic acid 6-phosphate etherase (301 aa).

In terms of domain architecture, SIS spans 59-222 (TSEALMHGGR…STSVMVKLGK (164 aa)). The Proton donor role is filled by Glu87. Glu118 is an active-site residue.

The protein belongs to the GCKR-like family. MurNAc-6-P etherase subfamily. In terms of assembly, homodimer.

It catalyses the reaction N-acetyl-D-muramate 6-phosphate + H2O = N-acetyl-D-glucosamine 6-phosphate + (R)-lactate. It functions in the pathway amino-sugar metabolism; N-acetylmuramate degradation. Functionally, specifically catalyzes the cleavage of the D-lactyl ether substituent of MurNAc 6-phosphate, producing GlcNAc 6-phosphate and D-lactate. The sequence is that of N-acetylmuramic acid 6-phosphate etherase from Picosynechococcus sp. (strain ATCC 27264 / PCC 7002 / PR-6) (Agmenellum quadruplicatum).